The sequence spans 92 residues: Small ribosomal subunit protein uS19 (92 aa).

This sequence belongs to the universal ribosomal protein uS19 family.

Its function is as follows. Protein S19 forms a complex with S13 that binds strongly to the 16S ribosomal RNA. This chain is Small ribosomal subunit protein uS19, found in Bacillus cereus (strain B4264).